The primary structure comprises 557 residues: Urocanate hydratase (557 aa).

NAD(+)-binding positions include 52–53 (GG), Gln-130, 176–178 (GMG), Glu-196, 242–243 (NA), 263–267 (QTSAH), 273–274 (YL), and Tyr-322. Cys-410 is a catalytic residue. Gly-492 serves as a coordination point for NAD(+).

It belongs to the urocanase family. It depends on NAD(+) as a cofactor.

It is found in the cytoplasm. The catalysed reaction is 4-imidazolone-5-propanoate = trans-urocanate + H2O. Its pathway is amino-acid degradation; L-histidine degradation into L-glutamate; N-formimidoyl-L-glutamate from L-histidine: step 2/3. In terms of biological role, catalyzes the conversion of urocanate to 4-imidazolone-5-propionate. This Rhizobium meliloti (strain 1021) (Ensifer meliloti) protein is Urocanate hydratase.